Reading from the N-terminus, the 558-residue chain is Oxygen-dependent choline dehydrogenase (558 aa).

Residue Asp8–Glu37 participates in FAD binding. Residue His475 is the Proton acceptor of the active site.

This sequence belongs to the GMC oxidoreductase family. It depends on FAD as a cofactor.

It catalyses the reaction choline + A = betaine aldehyde + AH2. It carries out the reaction betaine aldehyde + NAD(+) + H2O = glycine betaine + NADH + 2 H(+). Its pathway is amine and polyamine biosynthesis; betaine biosynthesis via choline pathway; betaine aldehyde from choline (cytochrome c reductase route): step 1/1. Involved in the biosynthesis of the osmoprotectant glycine betaine. Catalyzes the oxidation of choline to betaine aldehyde and betaine aldehyde to glycine betaine at the same rate. The polypeptide is Oxygen-dependent choline dehydrogenase (Chromohalobacter salexigens (strain ATCC BAA-138 / DSM 3043 / CIP 106854 / NCIMB 13768 / 1H11)).